Consider the following 491-residue polypeptide: UDP-N-acetylmuramate--L-alanine ligase (491 aa).

An ATP-binding site is contributed by 126 to 132 (GTHGKTT).

It belongs to the MurCDEF family.

The protein localises to the cytoplasm. The enzyme catalyses UDP-N-acetyl-alpha-D-muramate + L-alanine + ATP = UDP-N-acetyl-alpha-D-muramoyl-L-alanine + ADP + phosphate + H(+). The protein operates within cell wall biogenesis; peptidoglycan biosynthesis. Functionally, cell wall formation. This is UDP-N-acetylmuramate--L-alanine ligase from Klebsiella pneumoniae (strain 342).